We begin with the raw amino-acid sequence, 185 residues long: Ribosome-recycling factor (185 aa).

This sequence belongs to the RRF family.

The protein localises to the cytoplasm. In terms of biological role, responsible for the release of ribosomes from messenger RNA at the termination of protein biosynthesis. May increase the efficiency of translation by recycling ribosomes from one round of translation to another. The chain is Ribosome-recycling factor from Shewanella oneidensis (strain ATCC 700550 / JCM 31522 / CIP 106686 / LMG 19005 / NCIMB 14063 / MR-1).